Consider the following 509-residue polypeptide: Surface lipoprotein assembly modifier (509 aa).

A signal peptide spans 1–32 (MNLMINLKPLTFLPFFGRLVFLSGVIYNTAWA). Residues 33–204 (NTVIPVDNSR…SYIDTINQRD (172 aa)) form an N-terminal domain region. The tract at residues 43–72 (PDETFSQTSPKQHLFSQKPKPTEPTSSASS) is disordered. Over residues 46 to 57 (TFSQTSPKQHLF) the composition is skewed to polar residues. The TPR repeat unit spans residues 120-153 (FLLKWAQAVVARKQGKLNESVRLYRQIIAEKPNL). Residues 205-509 (SWNVYGGVNY…RIYLTFSKTF (305 aa)) form a C-terminal probable beta barrel region. The next 14 membrane-spanning stretches (beta stranded) occupy residues 206 to 216 (WNVYGGVNYLH), 245 to 256 (LSYFINLSKNWS), 261 to 270 (FFTEFSADIN), 284 to 294 (STRLNLGGGYR), 298 to 308 (TEVKLMPFVEQ), 331 to 341 (SGINLDVDYWL), 345 to 355 (WKISTVLEYTE), 371 to 381 (YSISNTLIYMP), 386 to 395 (FWFVGLDYYQ), 408 to 417 (QGIRLGWGQE), 423 to 432 (STRLQTSYAT), 461 to 470 (GVNFTIWHRS), 476 to 485 (ITPKITWAYQ), and 499 to 509 (NRIYLTFSKTF).

The protein belongs to the Slam family.

Its subcellular location is the cell outer membrane. Its function is as follows. Required for correct export to the cell surface of some cell outer membrane lipoproteins (tested with PM1514) upon heterologous expression in E.coli and probably also in Pasteurella. This is Surface lipoprotein assembly modifier from Pasteurella multocida (strain Pm70).